Here is an 82-residue protein sequence, read N- to C-terminus: RNA-binding protein Hfq (82 aa).

The Sm domain maps to aspartate 11–isoleucine 71.

The protein belongs to the Hfq family. As to quaternary structure, homohexamer.

Functionally, RNA chaperone that binds small regulatory RNA (sRNAs) and mRNAs to facilitate mRNA translational regulation in response to envelope stress, environmental stress and changes in metabolite concentrations. Also binds with high specificity to tRNAs. The chain is RNA-binding protein Hfq from Rhodopseudomonas palustris (strain HaA2).